We begin with the raw amino-acid sequence, 380 residues long: Ceramide synthase 2 (380 aa).

Topologically, residues 1 to 40 (MLQTLHDYFWWERLWLPVNLTWADLEDRDGRVYAKASDLY) are lumenal. Asn-19 is a glycosylation site (N-linked (GlcNAc...) asparagine). Residues 41–61 (ITLPLALLFLIIRYFFELYVA) traverse the membrane as a helical segment. A homeobox-like region spans residues 67 to 128 (LLNVKEKTRL…RRRRNQDRPS (62 aa)). Positions 131–332 (KKFREASWRF…ILRMAHKFIT (202 aa)) constitute a TLC domain. The next 4 helical transmembrane spans lie at 140–160 (FTFY…KPWF), 181–201 (WYYM…ASDV), 209–229 (QIIH…ANYV), and 264–284 (IFIV…PFWI). A Last loop motif motif is present at residues 291–300 (YPLELYPAFF). A helical membrane pass occupies residues 304–324 (FFNFMMGVLQLLHIFWAYLIL). Over 325–380 (RMAHKFITGKVVEDERSDREETESSEGEEAAAGGGAKNRPLANGHPILNNNHRKND) the chain is Cytoplasmic. The segment at 338 to 380 (DERSDREETESSEGEEAAAGGGAKNRPLANGHPILNNNHRKND) is disordered. Phosphoserine is present on Ser-341. Positions 344 to 353 (EETESSEGEE) are enriched in acidic residues. Phosphothreonine is present on Thr-346. Phosphoserine occurs at positions 348 and 349.

Interacts with ATP6V0C, ASGR1, ASGR2 and SLC22A1/OCT1. Interacts with ELOV1, HSD17B12 and TECR. Interacts with NDUFS2. Post-translationally, acetylated. Deacetylation by SIRT3 increases enzyme activity and promotes mitochondrial ceramide accumulation. In terms of processing, phosphorylated at the C-terminus by CK2, leading to increase the ceramide synthase activity.

Its subcellular location is the endoplasmic reticulum membrane. The enzyme catalyses a very long-chain fatty acyl-CoA + a sphingoid base = an N-(very-long-chain fatty acyl)-sphingoid base + CoA + H(+). It carries out the reaction docosanoyl-CoA + sphinganine = N-docosanoylsphinganine + CoA + H(+). The catalysed reaction is tetracosanoyl-CoA + sphinganine = N-tetracosanoylsphinganine + CoA + H(+). It catalyses the reaction hexacosanoyl-CoA + sphinganine = N-hexacosanoylsphinganine + CoA + H(+). The enzyme catalyses (15Z)-tetracosenoyl-CoA + sphinganine = N-(15Z-tetracosenoyl)-sphinganine + CoA + H(+). It carries out the reaction 2-hydroxytetracosanoyl-CoA + sphinganine = N-(2-hydroxytetracosanoyl)-sphinganine + CoA + H(+). The catalysed reaction is 2-hydroxydocosanoyl-CoA + sphinganine = N-(2-hydroxydocosanoyl)-sphinganine + CoA + H(+). It catalyses the reaction 2-hydroxytetracosenoyl-CoA + sphinganine = N-(2-hydroxytetracosenoyl)-sphinganine + CoA + H(+). The enzyme catalyses tetracosenoyl-CoA + sphinganine = an N-tetracosenoylsphinganine + CoA + H(+). It carries out the reaction hexacosenoyl-CoA + sphinganine = N-hexacosenoylsphinganine + CoA + H(+). The catalysed reaction is tetracosanoyl-CoA + sphing-4-enine = N-tetracosanoyl-sphing-4-enine + CoA + H(+). It catalyses the reaction tetracosenoyl-CoA + sphing-4-enine = N-(tetracosenoyl)-sphing-4-enine + CoA + H(+). The enzyme catalyses heptadecasphing-4-enine + tetracosanoyl-CoA = N-tetracosanoyl-heptadecasphing-4-enine + CoA + H(+). It carries out the reaction a fatty acyl-CoA + sphing-4-enine = an N-acylsphing-4-enine + CoA + H(+). The catalysed reaction is sphing-4-enine + hexadecanoyl-CoA = N-hexadecanoylsphing-4-enine + CoA + H(+). It catalyses the reaction sphing-4-enine + octadecanoyl-CoA = N-octadecanoylsphing-4-enine + CoA + H(+). The enzyme catalyses eicosanoyl-CoA + sphing-4-enine = N-eicosanoyl-sphing-4-enine + CoA + H(+). It carries out the reaction sphinganine + hexadecanoyl-CoA = N-hexadecanoylsphinganine + CoA + H(+). The catalysed reaction is sphinganine + octadecanoyl-CoA = N-(octadecanoyl)-sphinganine + CoA + H(+). It catalyses the reaction sphinganine + (9Z)-octadecenoyl-CoA = N-(9Z-octadecenoyl)-sphinganine + CoA + H(+). The enzyme catalyses eicosanoyl-CoA + sphinganine = N-eicosanoylsphinganine + CoA + H(+). The protein operates within lipid metabolism; sphingolipid metabolism. Ceramide synthase activity is inhibited by sphingosine-1-phosphate. Its function is as follows. Ceramide synthase that catalyzes the transfer of the acyl chain from acyl-CoA to a sphingoid base, with high selectivity toward very-long-chain fatty acyl-CoA (chain length C22-C27). N-acylates sphinganine and sphingosine bases to form dihydroceramides and ceramides in de novo synthesis and salvage pathways, respectively. Plays a non-redundant role in the synthesis of ceramides with very-long-chain fatty acids in kidney, liver and brain. Regulates the abundance of myelin-specific sphingolipids galactosylceramide and sulfatide that affects myelin sheath architecture and motor neuron functions. The polypeptide is Ceramide synthase 2 (Bos taurus (Bovine)).